Consider the following 414-residue polypeptide: Esterase FrsA (414 aa).

Belongs to the FrsA family.

The enzyme catalyses a carboxylic ester + H2O = an alcohol + a carboxylate + H(+). Functionally, catalyzes the hydrolysis of esters. The sequence is that of Esterase FrsA from Shigella sonnei (strain Ss046).